A 137-amino-acid polypeptide reads, in one-letter code: Ribosomal RNA large subunit methyltransferase H (137 aa).

S-adenosyl-L-methionine-binding positions include L56, G85, and L104–L109.

Belongs to the RNA methyltransferase RlmH family. Homodimer.

The protein resides in the cytoplasm. The catalysed reaction is pseudouridine(1915) in 23S rRNA + S-adenosyl-L-methionine = N(3)-methylpseudouridine(1915) in 23S rRNA + S-adenosyl-L-homocysteine + H(+). Specifically methylates the pseudouridine at position 1915 (m3Psi1915) in 23S rRNA. The chain is Ribosomal RNA large subunit methyltransferase H from Thermus thermophilus (strain ATCC 27634 / DSM 579 / HB8).